The following is a 123-amino-acid chain: Large ribosomal subunit protein uL29 (123 aa).

The protein belongs to the universal ribosomal protein uL29 family.

The protein is Large ribosomal subunit protein uL29 (RPL35) of Euphorbia esula (Leafy spurge).